Here is a 360-residue protein sequence, read N- to C-terminus: Mitogen-activated protein kinase 14 (360 aa).

The residue at position 2 (S2) is an N-acetylserine. Residue S2 is modified to Phosphoserine. Phosphothreonine is present on T16. The Protein kinase domain maps to 24–308; sequence YQNLSPVGSG…AAQALAHAYF (285 aa). ATP contacts are provided by residues 30–38 and K53; that span reads VGSGAYGSV. Position 53 is an N6-acetyllysine (K53). Catalysis depends on D150, which acts as the Proton acceptor. At K152 the chain carries N6-acetyllysine. T180 is subject to Phosphothreonine. The TXY motif lies at 180–182; the sequence is TGY. Y182 carries the phosphotyrosine modification. The residue at position 323 (Y323) is a Phosphotyrosine; by ZAP70.

The protein belongs to the protein kinase superfamily. CMGC Ser/Thr protein kinase family. MAP kinase subfamily. As to quaternary structure, component of a signaling complex containing at least AKAP13, PKN1, MAPK14, ZAK and MAP2K3. Within this complex, AKAP13 interacts directly with PKN1, which in turn recruits MAPK14, MAP2K3 and ZAK. Binds to a kinase interaction motif within the protein tyrosine phosphatase, PTPRR. This interaction retains MAPK14 in the cytoplasm and prevents nuclear accumulation. Interacts with SPAG9 and GADD45A. Interacts with CDC25B, CDC25C, DUSP1, DUSP10, DUSP16, NP60, SUPT20H and TAB1. Interacts with casein kinase II subunits CSNK2A1 and CSNK2B. Interacts with PPM1D. Interacts with CDK5RAP3; recruits PPM1D to MAPK14 and may regulate its dephosphorylation. Interacts with DUSP2; this interaction does not lead to catalytic activation of DUSP2 and dephosphrylation of MAPK14. It depends on Mg(2+) as a cofactor. In terms of processing, dually phosphorylated on Thr-180 and Tyr-182 by the MAP2Ks MAP2K3/MKK3, MAP2K4/MKK4 and MAP2K6/MKK6 in response to inflammatory cytokines, environmental stress or growth factors, which activates the enzyme. Dual phosphorylation can also be mediated by TAB1-mediated autophosphorylation. TCR engagement in T-cells also leads to Tyr-323 phosphorylation by ZAP70. Dephosphorylated and inactivated by DUPS1, DUSP10 and DUSP16. PPM1D also mediates dephosphorylation and inactivation of MAPK14. Acetylated at Lys-53 and Lys-152 by KAT2B and EP300. Acetylation at Lys-53 increases the affinity for ATP and enhances kinase activity. Lys-53 and Lys-152 are deacetylated by HDAC3. Post-translationally, ubiquitinated. Ubiquitination leads to degradation by the proteasome pathway.

It localises to the cytoplasm. The protein resides in the nucleus. The enzyme catalyses L-seryl-[protein] + ATP = O-phospho-L-seryl-[protein] + ADP + H(+). It catalyses the reaction L-threonyl-[protein] + ATP = O-phospho-L-threonyl-[protein] + ADP + H(+). Activated by cell stresses such as DNA damage, heat shock, osmotic shock, anisomycin and sodium arsenite, as well as pro-inflammatory stimuli such as bacterial lipopolysaccharide (LPS) and interleukin-1. Activation occurs through dual phosphorylation of Thr-180 and Tyr-182 by either of two dual specificity kinases, MAP2K3/MKK3 or MAP2K6/MKK6, and potentially also MAP2K4/MKK4, as well as by TAB1-mediated autophosphorylation. MAPK14 phosphorylated on both Thr-180 and Tyr-182 is 10-20-fold more active than MAPK14 phosphorylated only on Thr-180, whereas MAPK14 phosphorylated on Tyr-182 alone is inactive. whereas Thr-180 is necessary for catalysis, Tyr-182 may be required for auto-activation and substrate recognition. Phosphorylated at Tyr-323 by ZAP70 in an alternative activation pathway in response to TCR signaling in T-cells. This alternative pathway is inhibited by GADD45A. Inhibited by dual specificity phosphatases, such as DUSP1, DUSP10, and DUSP16. Specifically inhibited by the binding of pyridinyl-imidazole compounds, which are cytokine-suppressive anti-inflammatory drugs (CSAID). SB203580 is an inhibitor of MAPK14. Serine/threonine kinase which acts as an essential component of the MAP kinase signal transduction pathway. MAPK14 is one of the four p38 MAPKs which play an important role in the cascades of cellular responses evoked by extracellular stimuli such as pro-inflammatory cytokines or physical stress leading to direct activation of transcription factors. Accordingly, p38 MAPKs phosphorylate a broad range of proteins and it has been estimated that they may have approximately 200 to 300 substrates each. Some of the targets are downstream kinases which are activated through phosphorylation and further phosphorylate additional targets. RPS6KA5/MSK1 and RPS6KA4/MSK2 can directly phosphorylate and activate transcription factors such as CREB1, ATF1, the NF-kappa-B isoform RELA/NFKB3, STAT1 and STAT3, but can also phosphorylate histone H3 and the nucleosomal protein HMGN1. RPS6KA5/MSK1 and RPS6KA4/MSK2 play important roles in the rapid induction of immediate-early genes in response to stress or mitogenic stimuli, either by inducing chromatin remodeling or by recruiting the transcription machinery. On the other hand, two other kinase targets, MAPKAPK2/MK2 and MAPKAPK3/MK3, participate in the control of gene expression mostly at the post-transcriptional level, by phosphorylating ZFP36 (tristetraprolin) and ELAVL1, and by regulating EEF2K, which is important for the elongation of mRNA during translation. MKNK1/MNK1 and MKNK2/MNK2, two other kinases activated by p38 MAPKs, regulate protein synthesis by phosphorylating the initiation factor EIF4E2. MAPK14 also interacts with casein kinase II, leading to its activation through autophosphorylation and further phosphorylation of TP53/p53. In the cytoplasm, the p38 MAPK pathway is an important regulator of protein turnover. For example, CFLAR is an inhibitor of TNF-induced apoptosis whose proteasome-mediated degradation is regulated by p38 MAPK phosphorylation. In a similar way, MAPK14 phosphorylates the ubiquitin ligase SIAH2, regulating its activity towards EGLN3. MAPK14 may also inhibit the lysosomal degradation pathway of autophagy by interfering with the intracellular trafficking of the transmembrane protein ATG9. Another function of MAPK14 is to regulate the endocytosis of membrane receptors by different mechanisms that impinge on the small GTPase RAB5A. In addition, clathrin-mediated EGFR internalization induced by inflammatory cytokines and UV irradiation depends on MAPK14-mediated phosphorylation of EGFR itself as well as of RAB5A effectors. Ectodomain shedding of transmembrane proteins is regulated by p38 MAPKs as well. In response to inflammatory stimuli, p38 MAPKs phosphorylate the membrane-associated metalloprotease ADAM17. Such phosphorylation is required for ADAM17-mediated ectodomain shedding of TGF-alpha family ligands, which results in the activation of EGFR signaling and cell proliferation. Another p38 MAPK substrate is FGFR1. FGFR1 can be translocated from the extracellular space into the cytosol and nucleus of target cells, and regulates processes such as rRNA synthesis and cell growth. FGFR1 translocation requires p38 MAPK activation. In the nucleus, many transcription factors are phosphorylated and activated by p38 MAPKs in response to different stimuli. Classical examples include ATF1, ATF2, ATF6, ELK1, PTPRH, DDIT3, TP53/p53 and MEF2C and MEF2A. The p38 MAPKs are emerging as important modulators of gene expression by regulating chromatin modifiers and remodelers. The promoters of several genes involved in the inflammatory response, such as IL6, IL8 and IL12B, display a p38 MAPK-dependent enrichment of histone H3 phosphorylation on 'Ser-10' (H3S10ph) in LPS-stimulated myeloid cells. This phosphorylation enhances the accessibility of the cryptic NF-kappa-B-binding sites marking promoters for increased NF-kappa-B recruitment. Phosphorylates CDC25B and CDC25C which is required for binding to 14-3-3 proteins and leads to initiation of a G2 delay after ultraviolet radiation. Phosphorylates TIAR following DNA damage, releasing TIAR from GADD45A mRNA and preventing mRNA degradation. The p38 MAPKs may also have kinase-independent roles, which are thought to be due to the binding to targets in the absence of phosphorylation. Protein O-Glc-N-acylation catalyzed by the OGT is regulated by MAPK14, and, although OGT does not seem to be phosphorylated by MAPK14, their interaction increases upon MAPK14 activation induced by glucose deprivation. This interaction may regulate OGT activity by recruiting it to specific targets such as neurofilament H, stimulating its O-Glc-N-acylation. Required in mid-fetal development for the growth of embryo-derived blood vessels in the labyrinth layer of the placenta. Also plays an essential role in developmental and stress-induced erythropoiesis, through regulation of EPO gene expression. Phosphorylates S100A9 at 'Thr-113'. This chain is Mitogen-activated protein kinase 14, found in Rattus norvegicus (Rat).